We begin with the raw amino-acid sequence, 153 residues long: Aspartate carbamoyltransferase regulatory chain (153 aa).

Positions 109, 114, 138, and 141 each coordinate Zn(2+).

This sequence belongs to the PyrI family. In terms of assembly, contains catalytic and regulatory chains. Requires Zn(2+) as cofactor.

Its function is as follows. Involved in allosteric regulation of aspartate carbamoyltransferase. The sequence is that of Aspartate carbamoyltransferase regulatory chain from Shigella dysenteriae serotype 1 (strain Sd197).